A 234-amino-acid polypeptide reads, in one-letter code: MDDHLYRRRAAERALDYVESGMAIGLGTGSTASFMLRGLAARLADGRLQRVVGVPTSEQTAVLARELGIPLTTLDRHPSLDLALDGADEIDPHLRLIKGLGGAMLREKIVAASAARFVVMASVSKRVERLGERSPLPVEVVTFGMPLCIRRLAALGGEPVLRCDHSGAPFVTDEGNLILDCHFGVIADPEALAAAICAIPGVVAHGLFLGMASLAVIAGPDGIVELECPDASRR.

Residues 28–31 (TGST), 85–88 (DGAD), and 98–101 (KGLG) each bind substrate. Glutamate 107 (proton acceptor) is an active-site residue. Lysine 125 is a binding site for substrate.

It belongs to the ribose 5-phosphate isomerase family. As to quaternary structure, homodimer.

The catalysed reaction is aldehydo-D-ribose 5-phosphate = D-ribulose 5-phosphate. Its pathway is carbohydrate degradation; pentose phosphate pathway; D-ribose 5-phosphate from D-ribulose 5-phosphate (non-oxidative stage): step 1/1. Its function is as follows. Catalyzes the reversible conversion of ribose-5-phosphate to ribulose 5-phosphate. This Roseiflexus castenholzii (strain DSM 13941 / HLO8) protein is Ribose-5-phosphate isomerase A.